The primary structure comprises 369 residues: MKHMLIAGGGIGGLSAAISLRKAGFSVTLCEAASENRKTGAGILQPQNALAVLKELGVFEDCCKHGFQTEWFKTFDEQGNLLFQVSESFLDDSLPGRNNILRKTLNDILMKHAEAVGVDIKWGKKVVAYEETAESVTALCEDGEKMQADILAGFDGIHSVVRDKMLQKETEKEHLGMGAWRFYIELPDYTFEDATFMYRSGDTQIGVVPLAQHAGYVFVLQPCTSDYWDEEDTRFDRVKEILSGFRGLDFVTKHMSKQHPVIFNKLEQVAVQEPWHKGRVIIGGDAAHAGAPTLAQGAAMAIEDAIVLAEELQNHADHETALQAYYKRRAPRALKVQNLSSEIVRRRLKGEPGAEELIGECYAVLREGY.

Residues 1–32 (MKHMLIAGGGIGGLSAAISLRKAGFSVTLCEA) form the signal peptide. FAD contacts are provided by residues glycine 12, 31-32 (EA), valine 126, and aspartate 285.

FAD serves as cofactor.

The sequence is that of Putative FAD-dependent monooxygenase YetM (yetM) from Bacillus subtilis (strain 168).